A 1054-amino-acid chain; its full sequence is Topoisomerase 1-associated factor 1 (1054 aa).

Disordered regions lie at residues 522 to 543 (KADD…HESA), 823 to 846 (RDDK…EDDE), 865 to 953 (EMFA…TINL), and 968 to 1054 (VSDG…DDDE). A compositionally biased stretch (basic and acidic residues) spans 823–838 (RDDKERRGAGGDKEGS). The span at 877 to 887 (KTKQKLKRKGT) shows a compositional bias: basic residues. Basic and acidic residues-rich tracts occupy residues 890-901 (STREREKQRDYT), 928-953 (ERDR…TINL), and 979-1017 (TESH…HDSD).

The protein belongs to the timeless family. In terms of assembly, component of the fork protection complex (FPC) consisting of TOF1 and CSM3.

The protein localises to the nucleus. Functionally, forms a fork protection complex (FPC) with CSM3 and which is required for chromosome segregation during meiosis and DNA damage repair. FPC coordinates leading and lagging strand synthesis and moves with the replication fork. FPC stabilizes replication forks in a configuration that is recognized by replication checkpoint sensors. The polypeptide is Topoisomerase 1-associated factor 1 (TOF1) (Yarrowia lipolytica (strain CLIB 122 / E 150) (Yeast)).